Here is a 179-residue protein sequence, read N- to C-terminus: Large ribosomal subunit protein uL5 (179 aa).

This sequence belongs to the universal ribosomal protein uL5 family. As to quaternary structure, part of the 50S ribosomal subunit; part of the 5S rRNA/L5/L18/L25 subcomplex. Contacts the 5S rRNA and the P site tRNA. Forms a bridge to the 30S subunit in the 70S ribosome.

In terms of biological role, this is one of the proteins that bind and probably mediate the attachment of the 5S RNA into the large ribosomal subunit, where it forms part of the central protuberance. In the 70S ribosome it contacts protein S13 of the 30S subunit (bridge B1b), connecting the 2 subunits; this bridge is implicated in subunit movement. Contacts the P site tRNA; the 5S rRNA and some of its associated proteins might help stabilize positioning of ribosome-bound tRNAs. The chain is Large ribosomal subunit protein uL5 from Dehalococcoides mccartyi (strain ATCC BAA-2100 / JCM 16839 / KCTC 5957 / BAV1).